The chain runs to 398 residues: Lysophosphatidylserine lipase ABHD12 (398 aa).

Over 1–74 (MRKRTEPVAL…RKGLWLRLRK (74 aa)) the chain is Cytoplasmic. The helical transmembrane segment at 75-95 (ILFCVLGLYIAIPFLIKLCPG) threads the bilayer. The Extracellular portion of the chain corresponds to 96–398 (IQAKLIFLNF…LGKSEPEHQH (303 aa)). The N-linked (GlcNAc...) asparagine glycan is linked to asparagine 123. The Nucleophile role is filled by serine 246. Catalysis depends on charge relay system residues aspartate 333 and histidine 372.

It belongs to the serine esterase family.

It is found in the endoplasmic reticulum membrane. It catalyses the reaction 1-(9Z-octadecenoyl)-sn-glycero-3-phospho-L-serine + H2O = sn-glycero-3-phospho-L-serine + (9Z)-octadecenoate + H(+). It carries out the reaction 1-(9Z-octadecenoyl)-sn-glycero-3-phospho-(1'-sn-glycerol) + H2O = sn-glycero-3-phospho-(1'-sn-glycerol) + (9Z)-octadecenoate + H(+). The enzyme catalyses 1-(9Z-octadecenoyl)-sn-glycero-3-phospho-(1D-myo-inositol) + H2O = sn-glycero-3-phospho-1D-myo-inositol + (9Z)-octadecenoate + H(+). The catalysed reaction is 1-(9Z-octadecenoyl)-sn-glycero-3-phosphoethanolamine + H2O = sn-glycero-3-phosphoethanolamine + (9Z)-octadecenoate + H(+). It catalyses the reaction 1-(9Z-octadecenoyl)-sn-glycero-3-phosphocholine + H2O = 1-(9Z-octadecenoyl)-sn-glycerol + phosphocholine + H(+). It carries out the reaction 2-(9Z-octadecenoyl)-glycerol + H2O = glycerol + (9Z)-octadecenoate + H(+). The enzyme catalyses 1-hexadecanoyl-sn-glycero-3-phospho-L-serine + H2O = sn-glycero-3-phospho-L-serine + hexadecanoate + H(+). The catalysed reaction is 2-(5Z,8Z,11Z,14Z-eicosatetraenoyl)-glycerol + H2O = glycerol + (5Z,8Z,11Z,14Z)-eicosatetraenoate + H(+). It catalyses the reaction Hydrolyzes glycerol monoesters of long-chain fatty acids.. It carries out the reaction 1-decanoylglycerol + H2O = decanoate + glycerol + H(+). The enzyme catalyses 1-dodecanoylglycerol + H2O = dodecanoate + glycerol + H(+). The catalysed reaction is 1-tetradecanoylglycerol + H2O = tetradecanoate + glycerol + H(+). It catalyses the reaction 2-hexadecanoylglycerol + H2O = glycerol + hexadecanoate + H(+). It carries out the reaction 1-(9Z-octadecenoyl)-glycerol + H2O = glycerol + (9Z)-octadecenoate + H(+). The enzyme catalyses 2-(9Z,12Z-octadecadienoyl)-glycerol + H2O = (9Z,12Z)-octadecadienoate + glycerol + H(+). The catalysed reaction is 1-(5Z,8Z,11Z,14Z-eicosatetraenoyl)-glycerol + H2O = glycerol + (5Z,8Z,11Z,14Z)-eicosatetraenoate + H(+). It catalyses the reaction 1-(9Z,12Z-octadecadienoyl)-glycerol + H2O = (9Z,12Z)-octadecadienoate + glycerol + H(+). It carries out the reaction 1-hexadecanoylglycerol + H2O = glycerol + hexadecanoate + H(+). The enzyme catalyses 1-octadecanoylglycerol + H2O = octadecanoate + glycerol + H(+). The catalysed reaction is 1-octadecanoyl-2-(9,10-epoxyoctadecanoyl)-sn-glycero-3-phospho-L-serine + H2O = 9,10-epoxyoctadecanoate + 1-octadecanoyl-sn-glycero-3-phosphoserine + H(+). It catalyses the reaction 1-octadecanoyl-2-(10-hydroxyoctadecanoyl)-sn-glycero-3-phospho-L-serine + H2O = 1-octadecanoyl-sn-glycero-3-phosphoserine + 10-hydroxyoctadecanoate + H(+). It carries out the reaction 1-hexadecanoyl-2-(10-hydroxyoctadecanoyl)-sn-glycero-3-phospho-L-serine + H2O = 10-hydroxyoctadecanoate + 1-hexadecanoyl-sn-glycero-3-phospho-L-serine + H(+). Functionally, lysophosphatidylserine (LPS) lipase that mediates the hydrolysis of lysophosphatidylserine, a class of signaling lipids that regulates immunological and neurological processes. Represents a major lysophosphatidylserine lipase in the brain, thereby playing a key role in the central nervous system. Also able to hydrolyze oxidized phosphatidylserine; oxidized phosphatidylserine is produced in response to severe inflammatory stress and constitutes a proapoptotic 'eat me' signal. Also has monoacylglycerol (MAG) lipase activity: hydrolyzes 2-arachidonoylglycerol (2-AG), thereby acting as a regulator of endocannabinoid signaling pathways. Has a strong preference for very-long-chain lipid substrates; substrate specificity is likely due to improved catalysis and not improved substrate binding. The sequence is that of Lysophosphatidylserine lipase ABHD12 from Macaca fascicularis (Crab-eating macaque).